A 252-amino-acid chain; its full sequence is Imidazole glycerol phosphate synthase subunit HisF (252 aa).

Residues aspartate 11 and aspartate 130 contribute to the active site.

Belongs to the HisA/HisF family. As to quaternary structure, heterodimer of HisH and HisF.

Its subcellular location is the cytoplasm. The catalysed reaction is 5-[(5-phospho-1-deoxy-D-ribulos-1-ylimino)methylamino]-1-(5-phospho-beta-D-ribosyl)imidazole-4-carboxamide + L-glutamine = D-erythro-1-(imidazol-4-yl)glycerol 3-phosphate + 5-amino-1-(5-phospho-beta-D-ribosyl)imidazole-4-carboxamide + L-glutamate + H(+). Its pathway is amino-acid biosynthesis; L-histidine biosynthesis; L-histidine from 5-phospho-alpha-D-ribose 1-diphosphate: step 5/9. In terms of biological role, IGPS catalyzes the conversion of PRFAR and glutamine to IGP, AICAR and glutamate. The HisF subunit catalyzes the cyclization activity that produces IGP and AICAR from PRFAR using the ammonia provided by the HisH subunit. This chain is Imidazole glycerol phosphate synthase subunit HisF, found in Bacillus cereus (strain Q1).